A 127-amino-acid chain; its full sequence is Glycine cleavage system H protein (127 aa).

Residues 22–104 (EAVIGITQFA…YTDGWMVRVK (83 aa)) enclose the Lipoyl-binding domain. Lysine 63 carries the N6-lipoyllysine modification.

Belongs to the GcvH family. In terms of assembly, the glycine cleavage system is composed of four proteins: P, T, L and H. (R)-lipoate serves as cofactor.

In terms of biological role, the glycine cleavage system catalyzes the degradation of glycine. The H protein shuttles the methylamine group of glycine from the P protein to the T protein. The chain is Glycine cleavage system H protein from Nitratidesulfovibrio vulgaris (strain DSM 19637 / Miyazaki F) (Desulfovibrio vulgaris).